The following is a 31-amino-acid chain: Photosystem II reaction center protein T (31 aa).

The chain crosses the membrane as a helical span at residues 3–23 (SVAYIVVLTMALAVLFFAIAF).

Belongs to the PsbT family. As to quaternary structure, PSII is composed of 1 copy each of membrane proteins PsbA, PsbB, PsbC, PsbD, PsbE, PsbF, PsbH, PsbI, PsbJ, PsbK, PsbL, PsbM, PsbT, PsbX, PsbY, PsbZ, Psb30/Ycf12, peripheral proteins PsbO, CyanoQ (PsbQ), PsbU, PsbV and a large number of cofactors. It forms dimeric complexes.

It is found in the cellular thylakoid membrane. Functionally, found at the monomer-monomer interface of the photosystem II (PS II) dimer, plays a role in assembly and dimerization of PSII. PSII is a light-driven water plastoquinone oxidoreductase, using light energy to abstract electrons from H(2)O, generating a proton gradient subsequently used for ATP formation. This Crocosphaera subtropica (strain ATCC 51142 / BH68) (Cyanothece sp. (strain ATCC 51142)) protein is Photosystem II reaction center protein T.